The chain runs to 554 residues: Urocanate hydratase (554 aa).

NAD(+) contacts are provided by residues Gly-51–Gly-52, Gln-129, Gly-175–Gly-177, Glu-195, Asn-241–Ala-242, Gln-262–His-266, Tyr-272–Leu-273, and Tyr-321. Cys-409 is a catalytic residue. Gly-491 lines the NAD(+) pocket.

It belongs to the urocanase family. The cofactor is NAD(+).

The protein resides in the cytoplasm. It carries out the reaction 4-imidazolone-5-propanoate = trans-urocanate + H2O. It participates in amino-acid degradation; L-histidine degradation into L-glutamate; N-formimidoyl-L-glutamate from L-histidine: step 2/3. Its function is as follows. Catalyzes the conversion of urocanate to 4-imidazolone-5-propionate. This is Urocanate hydratase from Methylobacterium nodulans (strain LMG 21967 / CNCM I-2342 / ORS 2060).